We begin with the raw amino-acid sequence, 605 residues long: Elongation factor 4 (605 aa).

The tr-type G domain maps to S4 to K186. GTP is bound by residues D16 to T21 and N133 to D136.

It belongs to the TRAFAC class translation factor GTPase superfamily. Classic translation factor GTPase family. LepA subfamily.

It is found in the cell membrane. It catalyses the reaction GTP + H2O = GDP + phosphate + H(+). Functionally, required for accurate and efficient protein synthesis under certain stress conditions. May act as a fidelity factor of the translation reaction, by catalyzing a one-codon backward translocation of tRNAs on improperly translocated ribosomes. Back-translocation proceeds from a post-translocation (POST) complex to a pre-translocation (PRE) complex, thus giving elongation factor G a second chance to translocate the tRNAs correctly. Binds to ribosomes in a GTP-dependent manner. The sequence is that of Elongation factor 4 from Dehalococcoides mccartyi (strain ATCC BAA-2100 / JCM 16839 / KCTC 5957 / BAV1).